Consider the following 312-residue polypeptide: Olfactory receptor 2C1 (312 aa).

The Extracellular segment spans residues M1 to E24. A glycan (N-linked (GlcNAc...) asparagine) is linked at N6. A helical transmembrane segment spans residues I25–L48. Residues S49–T57 are Cytoplasmic-facing. Residues P58 to P79 form a helical membrane-spanning segment. The Extracellular portion of the chain corresponds to Q80–Q100. C97 and C189 form a disulfide bridge. A helical membrane pass occupies residues L101 to F120. Topologically, residues D121–R139 are cytoplasmic. A helical membrane pass occupies residues L140–S160. The Extracellular segment spans residues T161–N200. Residues G201–A222 form a helical membrane-spanning segment. Over Q223–K236 the chain is Cytoplasmic. The helical transmembrane segment at A237 to L261 threads the bilayer. Topologically, residues P262 to K272 are extracellular. Residues F273–L292 traverse the membrane as a helical segment. Residues R293–S312 lie on the Cytoplasmic side of the membrane.

It belongs to the G-protein coupled receptor 1 family. In terms of tissue distribution, olfactory epithelium. Present in various subcellular compartments of the olfactory sensory neurons, particularly in the axonal processes and neve terminals.

It localises to the cell membrane. Functionally, olfactory receptor that is activated by the binding of organosulfur odorants with thioether groups such as (methylthio)methanetiol (MTMT). Also binds odorants acetophenone and benzaldehyde. The activity of this receptor is mediated by G proteins which activate adenylyl cyclase. May be involved in the molecular processes underlying fasciculation and targeting of olfactory axons. In Mus musculus (Mouse), this protein is Olfactory receptor 2C1.